We begin with the raw amino-acid sequence, 62 residues long: Phylloseptin-Az7 (62 aa).

A signal peptide spans leucine 1–cysteine 19. Residues glutamate 20–glutamate 40 constitute a propeptide that is removed on maturation. Phenylalanine amide is present on phenylalanine 61.

Belongs to the frog skin active peptide (FSAP) family. Phylloseptin subfamily. As to expression, expressed by the skin glands.

It localises to the secreted. Has antimicrobial activity. This is Phylloseptin-Az7 (psn15) from Pithecopus azureus (Orange-legged monkey tree frog).